The primary structure comprises 150 residues: MKVVVQRVKEASVTNDTLNNQIKKGYCLLVGIGQDSTEQDADVIAKKIANARLFEDDNNKLNFNIQQMNGEILSVSQFTLYADVKKGNRPGFSNSKNPDQAVKIYEYFNDALRAYGLTVKTGEFGTHMNVNINNDGPVTIIYESQDGKIQ.

The Gly-cisPro motif, important for rejection of L-amino acids signature appears at 136 to 137; that stretch reads GP.

The protein belongs to the DTD family. In terms of assembly, homodimer.

The protein localises to the cytoplasm. The catalysed reaction is glycyl-tRNA(Ala) + H2O = tRNA(Ala) + glycine + H(+). It carries out the reaction a D-aminoacyl-tRNA + H2O = a tRNA + a D-alpha-amino acid + H(+). In terms of biological role, an aminoacyl-tRNA editing enzyme that deacylates mischarged D-aminoacyl-tRNAs. Also deacylates mischarged glycyl-tRNA(Ala), protecting cells against glycine mischarging by AlaRS. Acts via tRNA-based rather than protein-based catalysis; rejects L-amino acids rather than detecting D-amino acids in the active site. By recycling D-aminoacyl-tRNA to D-amino acids and free tRNA molecules, this enzyme counteracts the toxicity associated with the formation of D-aminoacyl-tRNA entities in vivo and helps enforce protein L-homochirality. In Staphylococcus aureus (strain MRSA252), this protein is D-aminoacyl-tRNA deacylase.